The primary structure comprises 326 residues: Protein BugT (326 aa).

The N-terminal stretch at 1–25 (MNMTRLLAVIGIFIATAGIAAPVSA) is a signal peptide.

This sequence belongs to the UPF0065 (bug) family.

Its subcellular location is the periplasm. This is Protein BugT (bugT) from Bordetella pertussis (strain Tohama I / ATCC BAA-589 / NCTC 13251).